The chain runs to 630 residues: Cytochrome B pre-mRNA-processing protein 2 (630 aa).

The protein localises to the mitochondrion. Functionally, appears to be specifically required for the splicing of the terminal intron (bI5) of the cytochrome b pre-mRNA. Can also stimulates the splicing of the omega intron of the precursor of large ribosomal RNA. In Saccharomyces cerevisiae (strain ATCC 204508 / S288c) (Baker's yeast), this protein is Cytochrome B pre-mRNA-processing protein 2 (CBP2).